The sequence spans 306 residues: Acetylglutamate kinase (306 aa).

Substrate is bound by residues 68–69, Arg-90, and Asn-195; that span reads GG.

Belongs to the acetylglutamate kinase family. ArgB subfamily.

It localises to the cytoplasm. It carries out the reaction N-acetyl-L-glutamate + ATP = N-acetyl-L-glutamyl 5-phosphate + ADP. Its pathway is amino-acid biosynthesis; L-arginine biosynthesis; N(2)-acetyl-L-ornithine from L-glutamate: step 2/4. Catalyzes the ATP-dependent phosphorylation of N-acetyl-L-glutamate. This is Acetylglutamate kinase from Chromohalobacter salexigens (strain ATCC BAA-138 / DSM 3043 / CIP 106854 / NCIMB 13768 / 1H11).